A 422-amino-acid chain; its full sequence is Ameloblastin (422 aa).

The N-terminal stretch at 1–26 (MSASKIPLFKMKGLLLFLSLVKMSLA) is a signal peptide. At Pro42 the chain carries Hydroxyproline. Ser48 is subject to Phosphoserine. A glycan (O-linked (GalNAc...) serine) is linked at Ser117. Residues 271–321 (GLNQNSPKGGDFTVEVDSPVSVTKGPEKGEGPEGSPLQEASPDKGENPALL) are disordered.

It belongs to the ameloblastin family. As to expression, ameloblast-specific.

The protein localises to the secreted. The protein resides in the extracellular space. It is found in the extracellular matrix. In terms of biological role, involved in the mineralization and structural organization of enamel. This is Ameloblastin (Ambn) from Rattus norvegicus (Rat).